The chain runs to 664 residues: Prelamin-A/C (664 aa).

An N-acetylmethionine modification is found at methionine 1. The segment at methionine 1–threonine 24 is disordered. A head region spans residues methionine 1–glutamate 33. The interval methionine 1–alanine 130 is interaction with MLIP. Threonine 3 is subject to Phosphothreonine. Residue serine 5 is modified to Phosphoserine. The residue at position 10 (threonine 10) is a Phosphothreonine. Serine 12 and serine 18 each carry phosphoserine. Phosphothreonine is present on threonine 19. Serine 22 is subject to Phosphoserine. Residues glutamate 31–leucine 387 enclose the IF rod domain. At lysine 32 the chain carries N6-acetyllysine; alternate. Lysine 32 is subject to N6-succinyllysine; alternate. Lysine 32 is covalently cross-linked (Glycyl lysine isopeptide (Lys-Gly) (interchain with G-Cter in SUMO2); alternate). The tract at residues aspartate 34–valine 70 is coil 1A. Serine 51, serine 66, and serine 71 each carry phosphoserine. Residues serine 71–alanine 80 are linker 1. An N6-acetyllysine mark is found at lysine 78 and lysine 97. The coil 1B stretch occupies residues tyrosine 81 to threonine 218. Lysine 97 participates in a covalent cross-link: Glycyl lysine isopeptide (Lys-Gly) (interchain with G-Cter in SUMO2). Residue serine 107 is modified to Phosphoserine. 6 positions are modified to N6-acetyllysine: lysine 108, lysine 114, lysine 123, lysine 135, lysine 144, and lysine 155. The residue at position 171 (lysine 171) is an N6-acetyllysine; alternate. The residue at position 171 (lysine 171) is an N6-succinyllysine; alternate. A Glycyl lysine isopeptide (Lys-Gly) (interchain with G-Cter in SUMO2); alternate cross-link involves residue lysine 171. Residues lysine 180, lysine 201, and lysine 208 each carry the N6-acetyllysine modification. Residue lysine 201 forms a Glycyl lysine isopeptide (Lys-Gly) (interchain with G-Cter in SUMO2); alternate linkage. Residue lysine 201 forms a Glycyl lysine isopeptide (Lys-Gly) (interchain with G-Cter in SUMO); alternate linkage. Lysine 208 participates in a covalent cross-link: Glycyl lysine isopeptide (Lys-Gly) (interchain with G-Cter in SUMO2). The residue at position 212 (serine 212) is a Phosphoserine. Glycyl lysine isopeptide (Lys-Gly) (interchain with G-Cter in SUMO2) cross-links involve residues lysine 219 and lysine 233. The tract at residues lysine 219 to alanine 242 is linker 2. Lysine 233, lysine 260, lysine 265, and lysine 270 each carry N6-acetyllysine. The coil 2 stretch occupies residues aspartate 243–glutamate 383. Lysine 260 is covalently cross-linked (Glycyl lysine isopeptide (Lys-Gly) (interchain with G-Cter in SUMO2); alternate). Lysine 270 participates in a covalent cross-link: Glycyl lysine isopeptide (Lys-Gly) (interchain with G-Cter in SUMO2); alternate. Residues serine 277, serine 282, serine 301, and serine 307 each carry the phosphoserine modification. Residue lysine 311 forms a Glycyl lysine isopeptide (Lys-Gly) (interchain with G-Cter in SUMO2); alternate linkage. Residues lysine 311, lysine 316, and lysine 341 each carry the N6-acetyllysine modification. Glycyl lysine isopeptide (Lys-Gly) (interchain with G-Cter in SUMO2) cross-links involve residues lysine 366 and lysine 378. Residues glutamate 384–valine 442 form a disordered region. Positions glutamate 384–methionine 664 are tail. Serine 390, serine 392, serine 395, serine 398, serine 403, serine 404, serine 406, serine 407, and serine 414 each carry phosphoserine. The segment covering serine 403–serine 414 has biased composition (low complexity). Threonine 416 is subject to Phosphothreonine. N6-acetyllysine is present on lysine 417. Glycyl lysine isopeptide (Lys-Gly) (interchain with G-Cter in SUMO2) cross-links involve residues lysine 417 and lysine 420. Residues lysine 417–glutamate 422 carry the Nuclear localization signal motif. 4 positions are modified to phosphoserine: serine 423, serine 426, serine 429, and serine 431. The region spanning serine 428 to arginine 545 is the LTD domain. Lysine 450 participates in a covalent cross-link: Glycyl lysine isopeptide (Lys-Gly) (interchain with G-Cter in SUMO2); alternate. Lysine 450 and lysine 457 each carry N6-acetyllysine. Residues serine 458 and serine 463 each carry the phosphoserine modification. Glycyl lysine isopeptide (Lys-Gly) (interchain with G-Cter in SUMO2) cross-links involve residues lysine 470 and lysine 486. N6-acetyllysine is present on lysine 486. Phosphothreonine occurs at positions 496 and 505. Serine 533 and serine 546 each carry phosphoserine. Threonine 548 carries the post-translational modification Phosphothreonine. The disordered stretch occupies residues aspartate 555–alanine 577. Residues serine 568 and serine 571 each carry the phosphoserine modification. Lysine 597 participates in a covalent cross-link: Glycyl lysine isopeptide (Lys-Gly) (interchain with G-Cter in SUMO2); alternate. Lysine 597 participates in a covalent cross-link: Glycyl lysine isopeptide (Lys-Gly) (interchain with G-Cter in SUMO1); alternate. The tract at residues alanine 598 to valine 620 is disordered. Residues serine 612, serine 613, serine 616, and serine 619 each carry the phosphoserine modification. 2 O-linked (GlcNAc) serine glycosylation sites follow: serine 625 and serine 628. Phosphoserine occurs at positions 628, 632, and 636. Residues leucine 647–cysteine 661 constitute a propeptide, removed in Lamin-A/C form. Position 661 is a cysteine methyl ester (cysteine 661). A lipid anchor (S-farnesyl cysteine) is attached at cysteine 661. The propeptide at serine 662–methionine 664 is removed in Prelamin-A/C form and in Lamin-A/C form.

The protein belongs to the intermediate filament family. Homodimer of lamin A and lamin C. Lamin dimers then assemble into dimeric head-to-tail polymers. Ultimately, two head-to-tail polymers assemble laterally into a protofilament with a uniformly shaped rod of 3.5 nm in diameter. Interacts with lamin-associated polypeptides IA, IB and TMPO-alpha, RB1 and with emerin. Interacts with SREBF1, SREBF2, SUN2 and TMEM43. Interacts with TMEM201. Proteolytically processed isoform A interacts with NARF. Interacts with SUN1. Interacts with MLIP. Interacts with DMPK; may regulate nuclear envelope stability. Interacts with SUV39H1; the interaction increases stability of SUV39H1. Interacts with SYNE2. Interacts with ITSN1 isoform 2. Interacts with IFFO1; enables the formation of an interior nucleoskeleton that is recruited to DNA double-strand breaks. As to quaternary structure, interacts with EMD. In terms of assembly, interacts (via C-terminus) with LEMD2 (via N-terminus) (in vitro). In terms of processing, proteolytic cleavage of the C-terminal of 18 residues of prelamin-A/C results in the production of lamin-A/C. The prelamin-A/C maturation pathway includes farnesylation of CAAX motif by protein farnesyltransferase (FNTA and FNTB), removal of the last three amino acids (-AAX) by RCE1/FACE2 and/or ZMPSTE24, methylation of the C-terminal cysteine by ICMT and endoproteolytic removal of the last 15 C-terminal amino acids by ZMPSTE24. Proteolytic cleavage requires prior farnesylation and methylation, and absence of these blocks cleavage. Post-translationally, farnesylation of prelamin-A/C facilitates nuclear envelope targeting. Phosphorylation plays a key role in lamin organization, subcellular localization and nuclear envelope disintegration. Phosphorylation by CDK1 at Ser-22 and Ser-392 at the onset of mitosis drives lamin disassembly and nuclear envelope breakdown. Phosphorylation at Ser-22 and Ser-392 during interphase promotes localization to the nucleoplasm and regulates lamina assembly. Phosphorylation at Ser-22, Ser-392 and Ser-628 during interphase causes redistribution between the nucleus and the cytoplasm. Phosphorylation at Ser-22 by CDK1 regulates matrix stiffness. Phosphorylation status of Ser-22 determines its localization between double-strand break (DSB) sites and the nuclear matrix. Phosphorylated by ATR at Ser-282 in response to DNA damage, leading to lamin disassembly and nuclear envelope rupture. Phosphorylation also regulates stability in micronuclei arising from genome instability: phosphorylation at Ser-395 by ATR in response to genome instability and double-stranded DNA breaks primes LMNA for subsequent phosphorylation at Ser-392 by CDK1 and micronuclei envelope rupture. The rupture of micronuclear envelope triggers the cGAS-STING pathway thereby activating the type I interferon response and innate immunity. In terms of processing, acetylation by KAT8 is required for nuclear architecture. Post-translationally, sumoylation is necessary for the localization to the nuclear envelope.

The protein localises to the nucleus lamina. Its subcellular location is the nucleus envelope. It localises to the nucleus. It is found in the nucleoplasm. The protein resides in the nucleus matrix. Its function is as follows. Lamins are intermediate filament proteins that assemble into a filamentous meshwork, and which constitute the major components of the nuclear lamina, a fibrous layer on the nucleoplasmic side of the inner nuclear membrane. Lamins provide a framework for the nuclear envelope, bridging the nuclear envelope and chromatin, thereby playing an important role in nuclear assembly, chromatin organization, nuclear membrane and telomere dynamics. Lamin A and C also regulate matrix stiffness by conferring nuclear mechanical properties. The structural integrity of the lamina is strictly controlled by the cell cycle, as seen by the disintegration and formation of the nuclear envelope in prophase and telophase, respectively. Lamin A and C are present in equal amounts in the lamina of mammals. Also invoved in DNA repair: recruited by DNA repair proteins XRCC4 and IFFO1 to the DNA double-strand breaks (DSBs) to prevent chromosome translocation by immobilizing broken DNA ends. Required for normal development of peripheral nervous system and skeletal muscle and for muscle satellite cell proliferation. Required for osteoblastogenesis and bone formation. Also prevents fat infiltration of muscle and bone marrow, helping to maintain the volume and strength of skeletal muscle and bone. Required for cardiac homeostasis. In terms of biological role, prelamin-A/C can accelerate smooth muscle cell senescence. It acts to disrupt mitosis and induce DNA damage in vascular smooth muscle cells (VSMCs), leading to mitotic failure, genomic instability, and premature senescence. The sequence is that of Prelamin-A/C (LMNA) from Sus scrofa (Pig).